The following is a 107-amino-acid chain: Serine palmitoyltransferase-regulating protein TSC3 (107 aa).

Residues 72 to 92 traverse the membrane as a helical segment; sequence VFFLVVFTLSLFGLLKWVLSL.

It localises to the endoplasmic reticulum membrane. Functionally, stimulates the activity of serine palmitoyltransferase (SPT). The chain is Serine palmitoyltransferase-regulating protein TSC3 (TSC3) from Eremothecium gossypii (strain ATCC 10895 / CBS 109.51 / FGSC 9923 / NRRL Y-1056) (Yeast).